Consider the following 370-residue polypeptide: 4-hydroxy-3-methylbut-2-en-1-yl diphosphate synthase (flavodoxin) (370 aa).

Positions 270, 273, 305, and 312 each coordinate [4Fe-4S] cluster.

This sequence belongs to the IspG family. The cofactor is [4Fe-4S] cluster.

The enzyme catalyses (2E)-4-hydroxy-3-methylbut-2-enyl diphosphate + oxidized [flavodoxin] + H2O + 2 H(+) = 2-C-methyl-D-erythritol 2,4-cyclic diphosphate + reduced [flavodoxin]. It participates in isoprenoid biosynthesis; isopentenyl diphosphate biosynthesis via DXP pathway; isopentenyl diphosphate from 1-deoxy-D-xylulose 5-phosphate: step 5/6. Its function is as follows. Converts 2C-methyl-D-erythritol 2,4-cyclodiphosphate (ME-2,4cPP) into 1-hydroxy-2-methyl-2-(E)-butenyl 4-diphosphate. In Hamiltonella defensa subsp. Acyrthosiphon pisum (strain 5AT), this protein is 4-hydroxy-3-methylbut-2-en-1-yl diphosphate synthase (flavodoxin).